Consider the following 928-residue polypeptide: BCAS3 microtubule associated cell migration factor (928 aa).

An N-acetylmethionine modification is found at methionine 1. The stretch at 69-114 (DLNDTSRNLEFHEIHSTGNEPPLLIMIGYSDGMQVWSIPISGEAQE) is one WD repeat. Lysine 215 participates in a covalent cross-link: Glycyl lysine isopeptide (Lys-Gly) (interchain with G-Cter in SUMO1); alternate. Lysine 215 is covalently cross-linked (Glycyl lysine isopeptide (Lys-Gly) (interchain with G-Cter in SUMO2); alternate). Required for recruitment to preautophagosomal structure in response to mitophagy regions lie at residues 254–312 (RGGA…SRRS) and 437–560 (YGGQ…IKAP). Residues serine 461, serine 480, and serine 488 each carry the phosphoserine modification. Disordered regions lie at residues 472–515 (TSKQ…PGNP) and 755–777 (TTVI…PQPL). Low complexity-rich tracts occupy residues 480–494 (SPVP…GSPL), 505–514 (NNFTNNNPGN), and 755–771 (TTVI…HGPS). Serine 838, serine 886, and serine 898 each carry phosphoserine. Positions 868 to 928 (ESPSRDVVGS…PLSLFPTGFP (61 aa)) are disordered. Residues 887–901 (IETLSNSSGSTSGSI) are compositionally biased toward low complexity.

It belongs to the BCAS3 family. Interacts with histone H3, ESR1, KAT2B and PELP1; the interactions occur in a estrogen-dependent manner. Interacts with beta-tubulin and VIM. Interacts (via C-terminal) with PHAF1; the interaction is requrired for the association with the phagophore. As to expression, expressed in stomach, liver, lung, kidney, prostate, testis, thyroid gland, adrenal gland, brain, heart, skeletal muscle, colon, spleen, small intestine, placenta, blood leukocyte and mammary epithelial cells. Expressed in undifferentiated ES cells. Expressed in blood islands and nascent blood vessels derived from differentiated ES cells into embryoid bodies (BD). Expressed in endothelial cells. Not detected in brain. Expressed in brain tumors (at protein level). Expressed in brain. Highly expressed in breast cancers and in glioma cell lines.

It is found in the nucleus. It localises to the cytoplasm. Its subcellular location is the cytoskeleton. The protein resides in the preautophagosomal structure. Plays a role in angiogenesis. Participates in the regulation of cell polarity and directional endothelial cell migration by mediating both the activation and recruitment of CDC42 and the reorganization of the actin cytoskeleton at the cell leading edge. Promotes filipodia formation. Functions synergistically with PELP1 as a transcriptional coactivator of estrogen receptor-responsive genes. Stimulates histone acetyltransferase activity. Binds to chromatin. Plays a regulatory role in autophagic activity. In complex with PHAF1, associates with the preautophagosomal structure during both non-selective and selective autophagy. Probably binds phosphatidylinositol 3-phosphate (PtdIns3P) which would mediate the recruitment preautophagosomal structures. In Homo sapiens (Human), this protein is BCAS3 microtubule associated cell migration factor.